A 55-amino-acid chain; its full sequence is Riparin-1.4 (55 aa).

Positions 1–15 (MKIIVVLAVLMLVSA) are cleaved as a signal peptide. The propeptide occupies 16–41 (QVCLVSAAEMGHSSDNELSSRDLVKR). An intrachain disulfide couples Cys-47 to Cys-53. Positions 54 to 55 (NH) are excised as a propeptide.

As to expression, expressed by the skin glands.

The protein resides in the secreted. The protein is Riparin-1.4 of Crinia riparia (Streambank froglet).